A 503-amino-acid polypeptide reads, in one-letter code: MFTATEAVPVAKVVAGNKRYPGVVALDNVNFTLNKGEVRALLGKNGAGKSTLIRMLTGSERPDSGDIWIGETRLEGDEATLTRRAAELGVRAVYQELSLVEGLTVAENLCLGQWPRRNGMIDYLQMAQDAQRCLQALGVDVSPEQLVSTLSPAQKQLVEIARVMKGEPRVVILDEPTSSLASAEVELVISAVKKMSALGVAVIYVSHRMEEIRRIASCATVMRDGQVAGDVMLENTSTHHIVSLMLGRDHVDIAPVAPQEIVDQAVLEVRALRHKPKLEDISFTLRRGEVLGIAGLLGAGRSELLKAIVGLEEYEQGEIVINGEKITRPDYGDMLKRGIGYTPENRKEAGIIPWLGVDENTVLTNRQKISANGVLQWSTIRRLTEEVMQRMTVKAASSETPIGTLSGGNQQKVVIGRWVYAASQILLLDEPTRGVDIEAKQQIYRIVRELAAEGKSVVFISSEVEELPLVCDRILLLQHGTFSQEFHAPVNVDELMSAILSVH.

ABC transporter domains lie at 8–249 and 261–499; these read VPVA…LGRD and IVDQ…MSAI. Position 43–50 (43–50) interacts with ATP; sequence GKNGAGKS.

This sequence belongs to the ABC transporter superfamily.

Its function is as follows. Probably part of a binding-protein-dependent transport system YphDEF. Probably responsible for energy coupling to the transport system. This is an uncharacterized protein from Escherichia coli (strain K12).